The sequence spans 233 residues: Homeobox protein ceh-30 (233 aa).

Residues 50 to 85 (NNSTYSHDLDPSPQSVRSDLSTSPRASSPDRNSPMS) are compositionally biased toward polar residues. Disordered regions lie at residues 50 to 93 (NNST…KART) and 206 to 233 (FQATSSSNSPSTHKSSESPQLDVSSNSD). A DNA-binding region (homeobox) is located at residues 88–147 (SRKARTIFTDKQLQELENTFEKQKYLSVQDRMDLAHRMGLSDTQVKTWYQNRRTKWKRQA). Residues 224–233 (PQLDVSSNSD) are compositionally biased toward polar residues.

It localises to the nucleus. Cell-type specific anti-apoptotic transcription factor required for the sexually dimorphic survival of the male-specific CEM (cephalic male) sensory neurons during sex determination. In hermaphrodites, the homologous cells undergo programmed cell death due to transcriptional repression of ceh-30 by tra-1, the terminal regulator in the sex determination pathway. The polypeptide is Homeobox protein ceh-30 (Caenorhabditis briggsae).